Consider the following 64-residue polypeptide: Small ribosomal subunit protein bS21 (64 aa).

The interval 40–64 is disordered; it reads PPSVKRKIKSQEAQRRMRRTKRKRF. A compositionally biased stretch (basic residues) spans 55–64; it reads RMRRTKRKRF.

This sequence belongs to the bacterial ribosomal protein bS21 family.

The chain is Small ribosomal subunit protein bS21 from Elusimicrobium minutum (strain Pei191).